Consider the following 145-residue polypeptide: uncharacterized protein (145 aa).

Residues 1–41 (MEQHYHQQNQLRQLKQQQLKELLQQQSKDKEEDEQKHDDYR) adopt a coiled-coil conformation. A disordered region spans residues 1–91 (MEQHYHQQNQ…LQISEPEGES (91 aa)). Over residues 7-26 (QQNQLRQLKQQQLKELLQQQ) the composition is skewed to low complexity. Basic and acidic residues predominate over residues 27 to 42 (SKDKEEDEQKHDDYRS). A compositionally biased stretch (low complexity) spans 43 to 58 (PTKTTTTTATSTSAAT).

This is an uncharacterized protein from Dictyostelium discoideum (Social amoeba).